Consider the following 741-residue polypeptide: HSP-interacting protein (741 aa).

TPR repeat units lie at residues 26 to 59 (SREL…LPAG), 65 to 100 (AHLR…VPRY), and 102 to 134 (RALL…EPGN). The tract at residues 168 to 270 (ASAKGEERKK…GESKQQKHSA (103 aa)) is disordered. Positions 171 to 184 (KGEERKKSRNKRFD) are enriched in basic and acidic residues. Residues 201 to 218 (SASTEKQAGPRQTNGTGN) show a composition bias toward polar residues. Basic and acidic residues predominate over residues 219–247 (HQDHTEDSESNGLEKLEQSTETGEKDMGK). Positions 248-258 (KRGAHAAGKKP) are enriched in basic residues. A PB1 domain is found at 285 to 364 (MKDVKLVFGE…VPIRFYVVEV (80 aa)). 4 TPR repeats span residues 496–530 (EFIL…KSDF), 532–557 (EGLI…ACKI), 558–591 (NMET…RLKG), and 628–663 (SHIN…AMEK).

In terms of assembly, interacts (via C-terminus) with O1. Interacts (via C-terminus) with OP10 (via N-terminus).

In terms of biological role, acts as a co-chaperone for HSP90 and is required for proper folding of the myosin motor domain. This is HSP-interacting protein from Zea mays (Maize).